The sequence spans 30 residues: Snaclec carinactivase-1 regulatory subunit 14 kDa chain (30 aa).

One can recognise a C-type lectin domain in the interval 1-30 (DCLPDWFHYEGHCYRVFDEPKKWADAEKFC). Cysteines 2 and 13 form a disulfide.

Belongs to the snaclec family. As to quaternary structure, heterodimer of a metalloproteinase subunit and a regulatory subunit comprising two polypeptides disulfide-linked (14 kDa and 17 kDa chains). As to expression, expressed by the venom gland.

It is found in the secreted. Its function is as follows. Calcium-dependent prothrombin activator. This protein may activate prothrombin via recognition by the regulatory subunit of the calcium ion bound conformation of its gamma-carboxyglutamic acid (GLA) domain, and the subsequent conversion of prothrombin to active thrombin is catalyzed by the catalytic subunit. This Echis carinatus (Saw-scaled viper) protein is Snaclec carinactivase-1 regulatory subunit 14 kDa chain.